Consider the following 122-residue polypeptide: Large ribosomal subunit protein uL14 (122 aa).

This sequence belongs to the universal ribosomal protein uL14 family. Part of the 50S ribosomal subunit. Forms a cluster with proteins L3 and L19. In the 70S ribosome, L14 and L19 interact and together make contacts with the 16S rRNA in bridges B5 and B8.

In terms of biological role, binds to 23S rRNA. Forms part of two intersubunit bridges in the 70S ribosome. This chain is Large ribosomal subunit protein uL14, found in Petrotoga mobilis (strain DSM 10674 / SJ95).